A 239-amino-acid polypeptide reads, in one-letter code: 7-cyano-7-deazaguanine synthase (239 aa).

8–18 lines the ATP pocket; the sequence is FSGGLDSTASL. Residues Cys194, Cys209, Cys212, and Cys215 each contribute to the Zn(2+) site.

This sequence belongs to the QueC family.

It catalyses the reaction 7-carboxy-7-deazaguanine + NH4(+) + ATP = 7-cyano-7-deazaguanine + ADP + phosphate + H2O + H(+). The protein operates within purine metabolism; 7-cyano-7-deazaguanine biosynthesis. In terms of biological role, catalyzes the ATP-dependent conversion of 7-carboxy-7-deazaguanine (CDG) to 7-cyano-7-deazaguanine (preQ(0)). The protein is 7-cyano-7-deazaguanine synthase of Pyrococcus abyssi (strain GE5 / Orsay).